We begin with the raw amino-acid sequence, 158 residues long: NAD(P)H-quinone oxidoreductase subunit J, chloroplastic (158 aa).

It belongs to the complex I 30 kDa subunit family. NDH is composed of at least 16 different subunits, 5 of which are encoded in the nucleus.

Its subcellular location is the plastid. The protein localises to the chloroplast thylakoid membrane. The enzyme catalyses a plastoquinone + NADH + (n+1) H(+)(in) = a plastoquinol + NAD(+) + n H(+)(out). The catalysed reaction is a plastoquinone + NADPH + (n+1) H(+)(in) = a plastoquinol + NADP(+) + n H(+)(out). NDH shuttles electrons from NAD(P)H:plastoquinone, via FMN and iron-sulfur (Fe-S) centers, to quinones in the photosynthetic chain and possibly in a chloroplast respiratory chain. The immediate electron acceptor for the enzyme in this species is believed to be plastoquinone. Couples the redox reaction to proton translocation, and thus conserves the redox energy in a proton gradient. This is NAD(P)H-quinone oxidoreductase subunit J, chloroplastic from Capsella bursa-pastoris (Shepherd's purse).